The following is a 412-amino-acid chain: NADH-quinone oxidoreductase subunit D (412 aa).

It belongs to the complex I 49 kDa subunit family. NDH-1 is composed of 14 different subunits. Subunits NuoB, C, D, E, F, and G constitute the peripheral sector of the complex.

The protein localises to the cell inner membrane. The catalysed reaction is a quinone + NADH + 5 H(+)(in) = a quinol + NAD(+) + 4 H(+)(out). In terms of biological role, NDH-1 shuttles electrons from NADH, via FMN and iron-sulfur (Fe-S) centers, to quinones in the respiratory chain. The immediate electron acceptor for the enzyme in this species is believed to be ubiquinone. Couples the redox reaction to proton translocation (for every two electrons transferred, four hydrogen ions are translocated across the cytoplasmic membrane), and thus conserves the redox energy in a proton gradient. This Sulfurimonas denitrificans (strain ATCC 33889 / DSM 1251) (Thiomicrospira denitrificans (strain ATCC 33889 / DSM 1251)) protein is NADH-quinone oxidoreductase subunit D.